The chain runs to 252 residues: Phosphate import ATP-binding protein PstB (252 aa).

One can recognise an ABC transporter domain in the interval 5–247 (MRGQDVKVFY…PKEQRTQDYI (243 aa)). An ATP-binding site is contributed by 37-44 (GPSGCGKS).

The protein belongs to the ABC transporter superfamily. Phosphate importer (TC 3.A.1.7) family. In terms of assembly, the complex is composed of two ATP-binding proteins (PstB), two transmembrane proteins (PstC and PstA) and a solute-binding protein (PstS).

The protein resides in the cell inner membrane. It catalyses the reaction phosphate(out) + ATP + H2O = ADP + 2 phosphate(in) + H(+). Part of the ABC transporter complex PstSACB involved in phosphate import. Responsible for energy coupling to the transport system. The chain is Phosphate import ATP-binding protein PstB from Bartonella henselae (strain ATCC 49882 / DSM 28221 / CCUG 30454 / Houston 1) (Rochalimaea henselae).